The sequence spans 96 residues: Alpha-elapitoxin-Al2b (96 aa).

The first 21 residues, 1–21 (MKTLLLTLVVVTIVCLDFGGG), serve as a signal peptide directing secretion. 5 cysteine pairs are disulfide-bonded: Cys24–Cys41, Cys34–Cys62, Cys47–Cys51, Cys66–Cys77, and Cys78–Cys83.

It belongs to the three-finger toxin family. Long-chain subfamily. Type II alpha-neurotoxin sub-subfamily. As to expression, expressed by the venom gland.

Its subcellular location is the secreted. Functionally, potent long-chain postsynaptic neurotoxin. Pseudo-irreversibly inhibits the nicotinic acetylcholine receptor through competitive antagonism. The chain is Alpha-elapitoxin-Al2b from Austrelaps labialis (Pygmy copperhead).